The sequence spans 451 residues: Glycylpeptide N-tetradecanoyltransferase (451 aa).

Residues 34–37, 167–169, and 175–179 contribute to the tetradecanoyl-CoA site; these read YKFW, LCV, and SKRLT. L451 (proton acceptor; via carboxylate) is an active-site residue.

Belongs to the NMT family. Monomer.

Its subcellular location is the cytoplasm. It carries out the reaction N-terminal glycyl-[protein] + tetradecanoyl-CoA = N-tetradecanoylglycyl-[protein] + CoA + H(+). In terms of biological role, adds a myristoyl group to the N-terminal glycine residue of certain cellular proteins. This Candida glabrata (strain ATCC 2001 / BCRC 20586 / JCM 3761 / NBRC 0622 / NRRL Y-65 / CBS 138) (Yeast) protein is Glycylpeptide N-tetradecanoyltransferase (NMT1).